The chain runs to 59 residues: Single-pass membrane and coiled-coil domain-containing protein 4 homolog (59 aa).

Over residues 1-11 (MAGRNKAKPRL) the composition is skewed to basic residues. Residues 1-20 (MAGRNKAKPRLSKKEKEERR) form a disordered region. The stretch at 10–30 (RLSKKEKEERRKDMAEVQEKV) forms a coiled coil. Residues 30–50 (VFSVVVPVVVAFTVVIMLIVY) traverse the membrane as a helical segment.

Belongs to the SMCO4 family.

Its subcellular location is the membrane. This is Single-pass membrane and coiled-coil domain-containing protein 4 homolog from Argas monolakensis (Mono lake bird tick).